A 237-amino-acid polypeptide reads, in one-letter code: Pyrimidine 5'-nucleotidase PynA (237 aa).

Aspartate 9 serves as the catalytic Nucleophile. Positions 9, 11, and 181 each coordinate Mg(2+). The Proton donor role is filled by aspartate 11.

The protein belongs to the HAD-like hydrolase superfamily. YjjG family. In terms of assembly, homodimer. Requires Mg(2+) as cofactor. Mn(2+) is required as a cofactor.

It is found in the cytoplasm. It catalyses the reaction a ribonucleoside 5'-phosphate + H2O = a ribonucleoside + phosphate. Its function is as follows. Nucleotidase that shows high phosphatase activity toward non-canonical pyrimidine nucleotides and three canonical nucleoside 5'-monophosphates (UMP, dUMP and dTMP), and no activity against IMP, UDP, GMP, AMP, UTP or pNPP. Appears to function as a house-cleaning nucleotidase in vivo, since the general nucleotidase activity of it allows it to protect cells against non-canonical pyrimidine derivatives such as 5-fluoro-2'-deoxyuridine monophosphate (5-FdUMP), and prevents the incorporation of potentially mutagenic nucleotides such as 5-bromo-2'-deoxyuridine (5-BrdU) into DNA. Is strictly specific to pyrimidine substrates with 5'-monophosphates and shows no activity against nucleoside di- and triphosphates. This chain is Pyrimidine 5'-nucleotidase PynA, found in Streptococcus pneumoniae (strain ATCC BAA-255 / R6).